Here is a 381-residue protein sequence, read N- to C-terminus: Chaperone protein DnaJ (381 aa).

A J domain is found at 3–66 (DYYETLGVER…DKRRMYDSGV (64 aa)). The segment at 129–211 (GGTAHVKINT…CMGHGRVRTT (83 aa)) adopts a CR-type zinc-finger fold. Zn(2+)-binding residues include cysteine 142, cysteine 145, cysteine 159, cysteine 162, cysteine 185, cysteine 188, cysteine 199, and cysteine 202. 4 CXXCXGXG motif repeats span residues 142 to 149 (CQECGGSG), 159 to 166 (CPDCHGQG), 185 to 192 (CERCEGHG), and 199 to 206 (CPSCMGHG). Residues 355 to 381 (ATHVSQASRPQAGQKKGFFSKLKDALS) are disordered. Over residues 356–365 (THVSQASRPQ) the composition is skewed to polar residues.

Belongs to the DnaJ family. As to quaternary structure, homodimer. Zn(2+) serves as cofactor.

It localises to the cytoplasm. Functionally, participates actively in the response to hyperosmotic and heat shock by preventing the aggregation of stress-denatured proteins and by disaggregating proteins, also in an autonomous, DnaK-independent fashion. Unfolded proteins bind initially to DnaJ; upon interaction with the DnaJ-bound protein, DnaK hydrolyzes its bound ATP, resulting in the formation of a stable complex. GrpE releases ADP from DnaK; ATP binding to DnaK triggers the release of the substrate protein, thus completing the reaction cycle. Several rounds of ATP-dependent interactions between DnaJ, DnaK and GrpE are required for fully efficient folding. Also involved, together with DnaK and GrpE, in the DNA replication of plasmids through activation of initiation proteins. The sequence is that of Chaperone protein DnaJ from Bifidobacterium longum (strain NCC 2705).